A 1710-amino-acid chain; its full sequence is Ankyrin repeat domain-containing protein 26 (1710 aa).

Residues Met1–His41 are disordered. 2 positions are modified to phosphoserine: Ser11 and Ser15. ANK repeat units follow at residues Arg45–Asp75, Met79–Val108, Glu112–Leu141, His145–Ala174, and Asp178–Ala207. A disordered region spans residues Lys222–Pro274. Phosphoserine is present on residues Ser241, Ser261, Ser489, and Ser530. The interval Asp504 to Asn630 is disordered. Positions Ala529–Asp566 form a coiled coil. Residues Thr569 to Gly580 show a composition bias toward acidic residues. Composition is skewed to basic and acidic residues over residues Lys586–Glu602 and Lys613–Lys626. Ser631 is modified (phosphoserine). Residues Asp650 to Glu660 show a composition bias toward acidic residues. Residues Asp650–Cys698 form a disordered region. Residues Gly661 to Lys673 are compositionally biased toward basic and acidic residues. 4 coiled-coil regions span residues Lys743–Met873, Glu905–Leu1472, Asn1517–Leu1587, and Leu1649–Gly1674. The tract at residues Ala892–His912 is disordered.

Interacts with TRIO. Interacts with GPS2. Interacts with CCDC85B. Interacts with HMMR.

Functionally, acts as a regulator of adipogenesis. Involved in the regulation of the feeding behavior. This is Ankyrin repeat domain-containing protein 26 from Homo sapiens (Human).